The primary structure comprises 1131 residues: DNA polymerase II large subunit (1131 aa).

Belongs to the archaeal DNA polymerase II family. As to quaternary structure, heterodimer of a large subunit and a small subunit.

It catalyses the reaction DNA(n) + a 2'-deoxyribonucleoside 5'-triphosphate = DNA(n+1) + diphosphate. It carries out the reaction Exonucleolytic cleavage in the 3'- to 5'-direction to yield nucleoside 5'-phosphates.. Its function is as follows. Possesses two activities: a DNA synthesis (polymerase) and an exonucleolytic activity that degrades single-stranded DNA in the 3'- to 5'-direction. Has a template-primer preference which is characteristic of a replicative DNA polymerase. This chain is DNA polymerase II large subunit, found in Methanococcus maripaludis (strain C5 / ATCC BAA-1333).